The chain runs to 93 residues: Large ribosomal subunit protein uL23 (93 aa).

It belongs to the universal ribosomal protein uL23 family. As to quaternary structure, part of the 50S ribosomal subunit. Contacts protein L29, and trigger factor when it is bound to the ribosome.

Functionally, one of the early assembly proteins it binds 23S rRNA. One of the proteins that surrounds the polypeptide exit tunnel on the outside of the ribosome. Forms the main docking site for trigger factor binding to the ribosome. This chain is Large ribosomal subunit protein uL23, found in Helicobacter pylori (strain P12).